We begin with the raw amino-acid sequence, 378 residues long: UPF0754 membrane protein BALH_0780 (378 aa).

The next 2 helical transmembrane spans lie at 1–21 and 357–377; these read MNIW…GGFT and YLGA…LLFL.

Belongs to the UPF0754 family.

The protein resides in the cell membrane. This is UPF0754 membrane protein BALH_0780 from Bacillus thuringiensis (strain Al Hakam).